We begin with the raw amino-acid sequence, 104 residues long: Large ribosomal subunit protein bL21 (104 aa).

This sequence belongs to the bacterial ribosomal protein bL21 family. In terms of assembly, part of the 50S ribosomal subunit. Contacts protein L20.

Its function is as follows. This protein binds to 23S rRNA in the presence of protein L20. The protein is Large ribosomal subunit protein bL21 of Azobacteroides pseudotrichonymphae genomovar. CFP2.